The sequence spans 35 residues: MLVVIMFFIAFVFCSWLSYSYLCPYISTKELNKSR.

A helical transmembrane segment spans residues 2 to 22 (LVVIMFFIAFVFCSWLSYSYL). At 23 to 35 (CPYISTKELNKSR) the chain is on the virion surface side.

Belongs to the orthopoxvirus OPG076 family. As to quaternary structure, component of the entry fusion complex (EFC) composed of OPG053, OPG076, OPG086, OPG094, OPG095, OPG099, OPG107, OPG143, OPG104, OPG147 and OPG155. Except for OPG095 and OPG053, each of the EFC proteins is required for assembly or stability of the complex. Post-translationally, unglycosylated because produced in viral factories instead of the classic ER -Golgi route.

The protein localises to the virion membrane. Component of the entry fusion complex (EFC), which consists of 11 proteins. During cell infection, this complex mediates entry of the virion core into the host cytoplasm by a two-step mechanism consisting of lipid mixing of the viral and cellular membranes and subsequent pore formation. The protein is Entry-fusion complex protein OPG076 (OPG076) of Cynomys gunnisoni (Gunnison's prairie dog).